The primary structure comprises 142 residues: MKTFVAKPAAVKRDWYVVDAEGKTLGRIATEIASRLRGKHKAEYTPHVDTGDYIIVINAEKVRVTGKKASDKIYYRHSEFPGGLKSISFEKLIDRKPEMVIELAVKGMLPRGPLGRAMYRKLKVYAGAEHNHTAQQPQVLDI.

This sequence belongs to the universal ribosomal protein uL13 family. In terms of assembly, part of the 50S ribosomal subunit.

This protein is one of the early assembly proteins of the 50S ribosomal subunit, although it is not seen to bind rRNA by itself. It is important during the early stages of 50S assembly. In Aliivibrio fischeri (strain ATCC 700601 / ES114) (Vibrio fischeri), this protein is Large ribosomal subunit protein uL13.